We begin with the raw amino-acid sequence, 139 residues long: Nucleoside diphosphate kinase (139 aa).

Lys-11, Phe-59, Arg-87, Thr-93, Arg-104, and Asn-114 together coordinate ATP. The active-site Pros-phosphohistidine intermediate is the His-117.

This sequence belongs to the NDK family. Homotetramer. It depends on Mg(2+) as a cofactor.

It localises to the cytoplasm. The enzyme catalyses a 2'-deoxyribonucleoside 5'-diphosphate + ATP = a 2'-deoxyribonucleoside 5'-triphosphate + ADP. The catalysed reaction is a ribonucleoside 5'-diphosphate + ATP = a ribonucleoside 5'-triphosphate + ADP. Major role in the synthesis of nucleoside triphosphates other than ATP. The ATP gamma phosphate is transferred to the NDP beta phosphate via a ping-pong mechanism, using a phosphorylated active-site intermediate. The polypeptide is Nucleoside diphosphate kinase (Wolbachia sp. subsp. Drosophila simulans (strain wRi)).